Consider the following 50-residue polypeptide: Large ribosomal subunit protein eL39 (50 aa).

It belongs to the eukaryotic ribosomal protein eL39 family.

The polypeptide is Large ribosomal subunit protein eL39 (Methanosphaerula palustris (strain ATCC BAA-1556 / DSM 19958 / E1-9c)).